A 296-amino-acid polypeptide reads, in one-letter code: Ribosomal RNA small subunit methyltransferase H (296 aa).

Residues 38-40 (GAH), E57, F80, D103, and H110 contribute to the S-adenosyl-L-methionine site.

Belongs to the methyltransferase superfamily. RsmH family.

The protein localises to the cytoplasm. The enzyme catalyses cytidine(1402) in 16S rRNA + S-adenosyl-L-methionine = N(4)-methylcytidine(1402) in 16S rRNA + S-adenosyl-L-homocysteine + H(+). Functionally, specifically methylates the N4 position of cytidine in position 1402 (C1402) of 16S rRNA. The sequence is that of Ribosomal RNA small subunit methyltransferase H from Borrelia garinii subsp. bavariensis (strain ATCC BAA-2496 / DSM 23469 / PBi) (Borreliella bavariensis).